Here is a 283-residue protein sequence, read N- to C-terminus: Probable endonuclease 4 (283 aa).

Zn(2+)-binding residues include His-69, His-109, Glu-144, Asp-178, His-181, His-215, Asp-228, His-230, and Glu-260.

It belongs to the AP endonuclease 2 family. It depends on Zn(2+) as a cofactor.

The enzyme catalyses Endonucleolytic cleavage to 5'-phosphooligonucleotide end-products.. In terms of biological role, endonuclease IV plays a role in DNA repair. It cleaves phosphodiester bonds at apurinic or apyrimidinic (AP) sites, generating a 3'-hydroxyl group and a 5'-terminal sugar phosphate. In Thermosipho melanesiensis (strain DSM 12029 / CIP 104789 / BI429), this protein is Probable endonuclease 4.